Reading from the N-terminus, the 670-residue chain is DNA ligase (670 aa).

NAD(+) contacts are provided by residues 35–39 (DSVYD), 84–85 (SL), and Glu-116. The active-site N6-AMP-lysine intermediate is Lys-118. 4 residues coordinate NAD(+): Arg-139, Glu-176, Lys-293, and Lys-317. The Zn(2+) site is built by Cys-411, Cys-414, Cys-429, and Cys-435. A BRCT domain is found at 592–670 (VVKSEIAGKT…EEAFLKLLKS (79 aa)).

The protein belongs to the NAD-dependent DNA ligase family. LigA subfamily. It depends on Mg(2+) as a cofactor. The cofactor is Mn(2+).

It catalyses the reaction NAD(+) + (deoxyribonucleotide)n-3'-hydroxyl + 5'-phospho-(deoxyribonucleotide)m = (deoxyribonucleotide)n+m + AMP + beta-nicotinamide D-nucleotide.. In terms of biological role, DNA ligase that catalyzes the formation of phosphodiester linkages between 5'-phosphoryl and 3'-hydroxyl groups in double-stranded DNA using NAD as a coenzyme and as the energy source for the reaction. It is essential for DNA replication and repair of damaged DNA. This Coxiella burnetii (strain Dugway 5J108-111) protein is DNA ligase.